The primary structure comprises 506 residues: Tabersonine 16-hydroxylase 1 (506 aa).

A helical transmembrane segment spans residues 1–21 (MEFYYFLYLAFLLFCFILSKT). Residue C447 participates in heme binding.

This sequence belongs to the cytochrome P450 family. It depends on heme as a cofactor. As to expression, predominantly expressed in young leaves of mature plants. Low expression in roots and flowers, but not detected in stems and old leaves. Found predominantly in leaf epidermis. Barely detected in roots, internodes, young and mature leaves, and flower buds, but relatively abundant in fully developed flowers. Not detected in leaf epidermal cells.

It is found in the endoplasmic reticulum membrane. The catalysed reaction is (-)-tabersonine + reduced [NADPH--hemoprotein reductase] + O2 = 16-hydroxytabersonine + oxidized [NADPH--hemoprotein reductase] + H2O + H(+). The protein operates within alkaloid biosynthesis; vindoline biosynthesis. Its function is as follows. Involved in the flower biosynthesis of vindoline, a precursor of vinblastine and vincristine. Hydroxylates specifically tabersonine, 2,3-dihydrotabersonine and 2,3-dihydro-3-hydroxytabersonine, but has no activity with naringenin, tryptamine, secologanin, strictosidine, ajmalicine, vindoline and catharanthine. The protein is Tabersonine 16-hydroxylase 1 of Catharanthus roseus (Madagascar periwinkle).